Consider the following 113-residue polypeptide: Heavy metal-associated isoprenylated plant protein 15 (113 aa).

Positions 1-65 (MIVWMGVYDQ…KWGKAKLTLY (65 aa)) constitute an HMA domain. A coiled-coil region spans residues 69–89 (DALKEAKIAEAKQKREEIERE). A Cysteine methyl ester modification is found at Cys110. The S-farnesyl cysteine moiety is linked to residue Cys110. Positions 111–113 (VIC) are cleaved as a propeptide — removed in mature form.

This sequence belongs to the HIPP family. In terms of tissue distribution, expressed in embryo sacs.

In terms of biological role, probable heavy-metal-binding protein. In Arabidopsis thaliana (Mouse-ear cress), this protein is Heavy metal-associated isoprenylated plant protein 15.